We begin with the raw amino-acid sequence, 228 residues long: Endonuclease V (228 aa).

Positions 43 and 109 each coordinate Mg(2+).

Belongs to the endonuclease V family. The cofactor is Mg(2+).

The protein localises to the cytoplasm. The enzyme catalyses Endonucleolytic cleavage at apurinic or apyrimidinic sites to products with a 5'-phosphate.. In terms of biological role, DNA repair enzyme involved in the repair of deaminated bases. Selectively cleaves double-stranded DNA at the second phosphodiester bond 3' to a deoxyinosine leaving behind the intact lesion on the nicked DNA. The sequence is that of Endonuclease V from Dictyoglomus thermophilum (strain ATCC 35947 / DSM 3960 / H-6-12).